The primary structure comprises 147 residues: Large ribosomal subunit protein uL13 (147 aa).

The protein belongs to the universal ribosomal protein uL13 family. Part of the 50S ribosomal subunit.

Functionally, this protein is one of the early assembly proteins of the 50S ribosomal subunit, although it is not seen to bind rRNA by itself. It is important during the early stages of 50S assembly. This chain is Large ribosomal subunit protein uL13, found in Micrococcus luteus (strain ATCC 4698 / DSM 20030 / JCM 1464 / CCM 169 / CCUG 5858 / IAM 1056 / NBRC 3333 / NCIMB 9278 / NCTC 2665 / VKM Ac-2230) (Micrococcus lysodeikticus).